The sequence spans 358 residues: uncharacterized protein (358 aa).

The first 15 residues, 1-15, serve as a signal peptide directing secretion; the sequence is MITGKTISLPLSVIA. Cys16 is lipidated: N-palmitoyl cysteine. Cys16 carries the S-diacylglycerol cysteine lipid modification. A disordered region spans residues 331 to 358; sequence PCGTGSPGNPPPNINSVAQHRISTNTNR. Positions 347-358 are enriched in polar residues; that stretch reads VAQHRISTNTNR.

The protein resides in the cell membrane. This is an uncharacterized protein from Sinorhizobium fredii (strain NBRC 101917 / NGR234).